The sequence spans 206 residues: Insecticyanin-B (206 aa).

A signal peptide spans 1 to 17 (MQRFLVFTIVAVATAAA). 2 disulfides stabilise this stretch: C26-C136 and C60-C192.

The protein belongs to the calycin superfamily. Lipocalin family. As to quaternary structure, homotetramer. In terms of tissue distribution, synthesized only in the caterpillars, apparently by the epidermis and secreted into the hemolymph. The protein is passed over from the larval hemolymph to that of pupae and adults and is sequestered in the eggs.

The protein resides in the secreted. Functionally, this protein binds a chromophore: biliverdin IX, isomer gamma. Mixed with lipoprotein-bound carotenes, this blue protein provides hornworms with their green cryptic coloration which serves a camouflage. The protein is Insecticyanin-B (INSB) of Manduca sexta (Tobacco hawkmoth).